A 41-amino-acid polypeptide reads, in one-letter code: U-megalopygitoxin(4)-Mo5 (41 aa).

Residues 1 to 23 form the signal peptide; that stretch reads MKCSLLLVVFAAMVALFAAGTNA.

Belongs to the caterpillar 4 family. Expressed by the venom apparatus.

The protein resides in the secreted. Its function is as follows. Probable toxin. In Megalopyge opercularis (Southern flannel moth), this protein is U-megalopygitoxin(4)-Mo5.